The sequence spans 586 residues: Chaperonin 60 subunit alpha 1, chloroplastic (586 aa).

A chloroplast-targeting transit peptide spans 1–46; the sequence is MASANALSSASVLCSSRQSKLGGGNQQQGQRVSYNKRTIRRFSVRA. S90 is modified (phosphoserine).

This sequence belongs to the chaperonin (HSP60) family. In terms of assembly, part of the Cpn60 complex composed of 7 alpha and 7 beta subunits. This complex shows ATPase activity. The Cpn60 complex interacts with the Cpn10 complex. In terms of tissue distribution, expressed in leaves, stems, siliques and flowers.

Its subcellular location is the plastid. It localises to the chloroplast. In terms of biological role, binds RuBisCO small and large subunits and is implicated in the assembly of the enzyme oligomer. Involved in protein assisted folding. Required for proper chloroplast development. The polypeptide is Chaperonin 60 subunit alpha 1, chloroplastic (CPN60A1) (Arabidopsis thaliana (Mouse-ear cress)).